A 108-amino-acid polypeptide reads, in one-letter code: uncharacterized protein (108 aa).

The residue at position 56 (T56) is a Phosphothreonine. Positions 89 to 108 are disordered; that stretch reads AQAKGTEQAEALKKGTSKWF.

Its subcellular location is the cytoplasm. This is an uncharacterized protein from Schizosaccharomyces pombe (strain 972 / ATCC 24843) (Fission yeast).